A 775-amino-acid polypeptide reads, in one-letter code: Dipeptidyl peptidase 4 (775 aa).

The signal sequence occupies residues Met-1–Ala-15. N-linked (GlcNAc...) asparagine glycosylation is found at Asn-81, Asn-111, Asn-170, and Asn-219. Catalysis depends on charge relay system residues Ser-613, Asp-690, and His-725.

It belongs to the peptidase S9B family.

The protein resides in the secreted. The catalysed reaction is Release of an N-terminal dipeptide, Xaa-Yaa-|-Zaa-, from a polypeptide, preferentially when Yaa is Pro, provided Zaa is neither Pro nor hydroxyproline.. In terms of biological role, extracellular dipeptidyl-peptidase which removes N-terminal dipeptides sequentially from polypeptides having unsubstituted N-termini provided that the penultimate residue is proline. Contributes to pathogenicity. The chain is Dipeptidyl peptidase 4 (DPP4) from Trichophyton tonsurans (Scalp ringworm fungus).